The chain runs to 50 residues: Defensin D4 (50 aa).

4 disulfides stabilise this stretch: Cys-3–Cys-50, Cys-14–Cys-35, Cys-20–Cys-44, and Cys-24–Cys-46.

As to expression, detected in seeds (at protein level).

It is found in the secreted. Its function is as follows. Antimicrobial peptide with antifungal activity. The sequence is that of Defensin D4 from Nigella sativa (Black cumin).